Consider the following 491-residue polypeptide: Xaa-Pro aminopeptidase 1 (491 aa).

Residues Met1–Pro32 form a disordered region. Mn(2+) contacts are provided by Asp308, Asp320, His403, Glu434, and Glu458.

This sequence belongs to the peptidase M24B family. Homodimer. Mn(2+) is required as a cofactor.

It catalyses the reaction Release of any N-terminal amino acid, including proline, that is linked to proline, even from a dipeptide or tripeptide.. The protein is Xaa-Pro aminopeptidase 1 (pepPI) of Streptomyces coelicolor (strain ATCC BAA-471 / A3(2) / M145).